We begin with the raw amino-acid sequence, 310 residues long: Tyrosine recombinase XerC (310 aa).

Residues 22-103 enclose the Core-binding (CB) domain; sequence SQMLEAIEDF…SVKSFSTWAV (82 aa). In terms of domain architecture, Tyr recombinase spans 124–304; that stretch reads NLPRVLGEVQ…SSQRLLEAFR (181 aa). Catalysis depends on residues Arg-165, Lys-189, His-256, Arg-259, and His-282. Tyr-291 (O-(3'-phospho-DNA)-tyrosine intermediate) is an active-site residue.

It belongs to the 'phage' integrase family. XerC subfamily. Forms a cyclic heterotetrameric complex composed of two molecules of XerC and two molecules of XerD.

It is found in the cytoplasm. In terms of biological role, site-specific tyrosine recombinase, which acts by catalyzing the cutting and rejoining of the recombining DNA molecules. The XerC-XerD complex is essential to convert dimers of the bacterial chromosome into monomers to permit their segregation at cell division. It also contributes to the segregational stability of plasmids. This is Tyrosine recombinase XerC from Corynebacterium efficiens (strain DSM 44549 / YS-314 / AJ 12310 / JCM 11189 / NBRC 100395).